Consider the following 299-residue polypeptide: Probable lipid kinase YegS-like (299 aa).

The region spanning 2-133 is the DAGKc domain; sequence ATYPESLLIL…VDIAQVNDKT (132 aa). ATP is bound by residues Thr40, 66–72, and Thr95; that span reads GDGTINE. 3 residues coordinate Mg(2+): Leu215, Asp218, and Leu220. Residue Glu271 is the Proton acceptor of the active site.

It belongs to the diacylglycerol/lipid kinase family. YegS lipid kinase subfamily. The cofactor is Mg(2+). Requires Ca(2+) as cofactor.

Its subcellular location is the cytoplasm. In terms of biological role, probably phosphorylates lipids; the in vivo substrate is unknown. The sequence is that of Probable lipid kinase YegS-like from Enterobacter sp. (strain 638).